A 99-amino-acid chain; its full sequence is Acylphosphatase (99 aa).

One can recognise an Acylphosphatase-like domain in the interval 5-97 (IRQVMVRGRV…YAGERFSILS (93 aa)). Active-site residues include R20 and N38.

The protein belongs to the acylphosphatase family.

The catalysed reaction is an acyl phosphate + H2O = a carboxylate + phosphate + H(+). The protein is Acylphosphatase (acyP) of Rhodopseudomonas palustris (strain BisB5).